Here is a 338-residue protein sequence, read N- to C-terminus: MKNSADITVLGAGSYGTALAISLASNGHKTLLWGHDPVHMQTLAQDKCNQAFLPGIAFPDCLQIEADLAKALAASNNVLVVVPSHVFGTVLEQAKPLLRSDARIVWATKGLEPETGRLLQDVARDVLGEQYPLAVLSGPTFAKELAMGLPTAISVAGTCPTFTNYLVELLHSPKRLRVYANDDFTGLQLGGAVKNVIAIGAGMSDGIGFGANARTALITRGLVELTRLGEALGANAATFMGMAGLGDLVLTCTDNQSRNRRFGLALGKGCDVMTAQAEIGQVVEGYRNTKEVFTLAKRLGVEMPITEQIYQVLYQGKSPVDAAKELLSREKKSETPAQ.

Serine 14, tyrosine 15, histidine 35, and lysine 109 together coordinate NADPH. Sn-glycerol 3-phosphate is bound by residues lysine 109, glycine 138, and threonine 140. An NADPH-binding site is contributed by alanine 142. Positions 194, 247, 257, 258, and 259 each coordinate sn-glycerol 3-phosphate. Catalysis depends on lysine 194, which acts as the Proton acceptor. Arginine 258 serves as a coordination point for NADPH. 2 residues coordinate NADPH: valine 282 and glutamate 284.

It belongs to the NAD-dependent glycerol-3-phosphate dehydrogenase family.

Its subcellular location is the cytoplasm. It catalyses the reaction sn-glycerol 3-phosphate + NAD(+) = dihydroxyacetone phosphate + NADH + H(+). The catalysed reaction is sn-glycerol 3-phosphate + NADP(+) = dihydroxyacetone phosphate + NADPH + H(+). It functions in the pathway membrane lipid metabolism; glycerophospholipid metabolism. Functionally, catalyzes the reduction of the glycolytic intermediate dihydroxyacetone phosphate (DHAP) to sn-glycerol 3-phosphate (G3P), the key precursor for phospholipid synthesis. This chain is Glycerol-3-phosphate dehydrogenase [NAD(P)+], found in Shewanella baltica (strain OS155 / ATCC BAA-1091).